The chain runs to 367 residues: GMP synthase [glutamine-hydrolyzing] subunit B (367 aa).

Residues 2–190 form the GMPS ATP-PPase domain; the sequence is FDPASFVEEI…LKLPKEISER (189 aa). 29–35 contacts ATP; sequence SGGVDST.

Heterodimer composed of a glutamine amidotransferase subunit (A) and a GMP-binding subunit (B).

The catalysed reaction is XMP + L-glutamine + ATP + H2O = GMP + L-glutamate + AMP + diphosphate + 2 H(+). The protein operates within purine metabolism; GMP biosynthesis; GMP from XMP (L-Gln route): step 1/1. Its function is as follows. Catalyzes the synthesis of GMP from XMP. The chain is GMP synthase [glutamine-hydrolyzing] subunit B (guaAB) from Saccharolobus solfataricus (strain ATCC 35092 / DSM 1617 / JCM 11322 / P2) (Sulfolobus solfataricus).